A 971-amino-acid polypeptide reads, in one-letter code: Exportin-2 (971 aa).

One can recognise an Importin N-terminal domain in the interval 29-102 (AEKYLESVEG…KSSIINLMLR (74 aa)).

The protein belongs to the XPO2/CSE1 family.

Its subcellular location is the cytoplasm. The protein resides in the nucleus. Functionally, export receptor for importin alpha. Mediates importin-alpha re-export from the nucleus to the cytoplasm after import substrates have been released into the nucleoplasm. The chain is Exportin-2 (cse1l) from Xenopus laevis (African clawed frog).